A 454-amino-acid chain; its full sequence is Bifunctional protein GlmU (454 aa).

Residues 1-226 (MSLEIVILAA…AMEVQGVNDR (226 aa)) are pyrophosphorylase. Residues 8-11 (LAAG), lysine 22, glutamine 73, 78-79 (GT), 99-101 (YGD), glycine 136, glutamate 151, asparagine 166, and asparagine 224 each bind UDP-N-acetyl-alpha-D-glucosamine. Aspartate 101 contacts Mg(2+). Asparagine 224 contributes to the Mg(2+) binding site. A linker region spans residues 227–247 (MQQAQLERHYQRLRAEELMRQ). An N-acetyltransferase region spans residues 248–454 (GVTLLDPQRL…NWKRPEKIKK (207 aa)). UDP-N-acetyl-alpha-D-glucosamine contacts are provided by arginine 330 and lysine 348. The active-site Proton acceptor is histidine 360. UDP-N-acetyl-alpha-D-glucosamine is bound by residues tyrosine 363 and asparagine 374. Acetyl-CoA contacts are provided by residues alanine 377, 383–384 (NY), serine 402, alanine 420, and arginine 437.

It in the N-terminal section; belongs to the N-acetylglucosamine-1-phosphate uridyltransferase family. In the C-terminal section; belongs to the transferase hexapeptide repeat family. As to quaternary structure, homotrimer. Mg(2+) is required as a cofactor.

It localises to the cytoplasm. It catalyses the reaction alpha-D-glucosamine 1-phosphate + acetyl-CoA = N-acetyl-alpha-D-glucosamine 1-phosphate + CoA + H(+). The enzyme catalyses N-acetyl-alpha-D-glucosamine 1-phosphate + UTP + H(+) = UDP-N-acetyl-alpha-D-glucosamine + diphosphate. Its pathway is nucleotide-sugar biosynthesis; UDP-N-acetyl-alpha-D-glucosamine biosynthesis; N-acetyl-alpha-D-glucosamine 1-phosphate from alpha-D-glucosamine 6-phosphate (route II): step 2/2. It participates in nucleotide-sugar biosynthesis; UDP-N-acetyl-alpha-D-glucosamine biosynthesis; UDP-N-acetyl-alpha-D-glucosamine from N-acetyl-alpha-D-glucosamine 1-phosphate: step 1/1. The protein operates within bacterial outer membrane biogenesis; LPS lipid A biosynthesis. Its function is as follows. Catalyzes the last two sequential reactions in the de novo biosynthetic pathway for UDP-N-acetylglucosamine (UDP-GlcNAc). The C-terminal domain catalyzes the transfer of acetyl group from acetyl coenzyme A to glucosamine-1-phosphate (GlcN-1-P) to produce N-acetylglucosamine-1-phosphate (GlcNAc-1-P), which is converted into UDP-GlcNAc by the transfer of uridine 5-monophosphate (from uridine 5-triphosphate), a reaction catalyzed by the N-terminal domain. The chain is Bifunctional protein GlmU from Pseudomonas aeruginosa (strain ATCC 15692 / DSM 22644 / CIP 104116 / JCM 14847 / LMG 12228 / 1C / PRS 101 / PAO1).